The chain runs to 291 residues: tRNA dimethylallyltransferase (291 aa).

An ATP-binding site is contributed by 11–18 (GPTASGKS). 13–18 (TASGKS) serves as a coordination point for substrate. The tract at residues 42-45 (DSMQ) is interaction with substrate tRNA.

Belongs to the IPP transferase family. In terms of assembly, monomer. Mg(2+) is required as a cofactor.

It carries out the reaction adenosine(37) in tRNA + dimethylallyl diphosphate = N(6)-dimethylallyladenosine(37) in tRNA + diphosphate. Catalyzes the transfer of a dimethylallyl group onto the adenine at position 37 in tRNAs that read codons beginning with uridine, leading to the formation of N6-(dimethylallyl)adenosine (i(6)A). This Rubrobacter xylanophilus (strain DSM 9941 / JCM 11954 / NBRC 16129 / PRD-1) protein is tRNA dimethylallyltransferase.